Consider the following 746-residue polypeptide: Ferric enterobactin receptor (746 aa).

The N-terminal stretch at 1–25 (MSSRALPAVPFLLLSSCLLANAVHA) is a signal peptide. Residues 39 to 44 (QTVVAT) carry the TonB box motif. The 128-residue stretch at 47-174 (EETKQAPGVS…AGGVVNIITK (128 aa)) folds into the TBDR plug domain. Disordered regions lie at residues 82-102 (VNLTGNSSSGQRGNNRQIDIR), 235-254 (GHESNRTGKQAGTLPAGREG), and 397-424 (QKLDDPSSNTQNTEEGGSIPGLAGKNRS). Residues 84-98 (LTGNSSSGQRGNNRQ) show a composition bias toward polar residues. Residues 179-746 (ETHGNLSVYS…TFYTSLTASF (568 aa)) form the TBDR beta-barrel domain. Residues 402–411 (PSSNTQNTEE) show a composition bias toward polar residues. The short motif at 729–746 (ATYNEPGRTFYTSLTASF) is the TonB C-terminal box element.

This sequence belongs to the TonB-dependent receptor family.

It is found in the cell outer membrane. Specific receptor for the siderophore ferric enterobactin. The polypeptide is Ferric enterobactin receptor (pfeA) (Pseudomonas aeruginosa (strain ATCC 15692 / DSM 22644 / CIP 104116 / JCM 14847 / LMG 12228 / 1C / PRS 101 / PAO1)).